We begin with the raw amino-acid sequence, 98 residues long: NADH-ubiquinone oxidoreductase chain 4L (98 aa).

The next 3 membrane-spanning stretches (helical) occupy residues 1–21, 28–48, and 59–79; these read MMSI…GVLI, STLL…ALLI, and APLV…ALLV.

Belongs to the complex I subunit 4L family. As to quaternary structure, core subunit of respiratory chain NADH dehydrogenase (Complex I) which is composed of 45 different subunits.

The protein resides in the mitochondrion inner membrane. The catalysed reaction is a ubiquinone + NADH + 5 H(+)(in) = a ubiquinol + NAD(+) + 4 H(+)(out). Core subunit of the mitochondrial membrane respiratory chain NADH dehydrogenase (Complex I) which catalyzes electron transfer from NADH through the respiratory chain, using ubiquinone as an electron acceptor. Part of the enzyme membrane arm which is embedded in the lipid bilayer and involved in proton translocation. The sequence is that of NADH-ubiquinone oxidoreductase chain 4L (MT-ND4L) from Pseudocheirus peregrinus (Common ring-tailed possum).